A 428-amino-acid chain; its full sequence is Probable methanogen homoaconitase large subunit (428 aa).

C304, C364, and C367 together coordinate [4Fe-4S] cluster.

This sequence belongs to the aconitase/IPM isomerase family. LeuC type 2 subfamily. In terms of assembly, heterotetramer of 2 HacA and 2 HacB proteins.

It catalyses the reaction (2R)-homocitrate = (2R,3S)-homoisocitrate. The enzyme catalyses (2R)-homocitrate = cis-homoaconitate + H2O. It carries out the reaction (2R,3S)-homoisocitrate = cis-homoaconitate + H2O. The catalysed reaction is cis-(homo)2aconitate + H2O = (2R,3S)-iso(homo)2citrate. It catalyses the reaction cis-(homo)3aconitate + H2O = (2R,3S)-iso(homo)3citrate. The protein operates within organic acid metabolism; 2-oxosuberate biosynthesis. Its function is as follows. Component of a hydro-lyase with broad substrate specificity for cis-unsaturated tricarboxylic acids. Catalyzes both the reversible dehydration of (R)-homocitrate ((R)-2-hydroxybutane-1,2,4-tricarboxylate) to produce cis-homoaconitate ((Z)-but-1-ene-1,2,4-tricarboxylate), and its hydration to homoisocitrate ((1R,2S)-1-hydroxybutane-1,2,4-tricarboxylate). Is also able to hydrate the analogous longer chain substrates cis-homo(2)-aconitate, cis-homo(3)-aconitate. These reactions are part of the biosynthesis pathway of coenzyme B. This is Probable methanogen homoaconitase large subunit (hacA) from Methanothermobacter thermautotrophicus (strain ATCC 29096 / DSM 1053 / JCM 10044 / NBRC 100330 / Delta H) (Methanobacterium thermoautotrophicum).